The sequence spans 700 residues: MAQDVLTDLTKVRNIGIMAHIDAGKTTTTERILFYTGINYKIGEVHDGAATMDWMAQEQERGITITSAATTCFWEGTQINIIDTPGHVDFTVEVERSLRVLDGAVAVFDGKEGVEPQSETVWRQADKYDVPRICFVNKMDKLGADFFFTVGTISDRLGAEPLVMQLPIGAENSFAGVVDLVHMRALTWRGEVQMGADYTVEEIPADLLDQANEYRAKLVERVAETDEALLEKYLGGEDLTPEEIKAAVRKLTINSELYPIFCGSAFKNKGVQPMLDAVIDYLPSPLDVKPMIGHKVGDESVEIIRKPDATEPFSALAFKVAAHPFFGKLTYVRVYSGVVAAGSQVVNSTKGKKERIGKLFQMHSNKENPVDEARAGHIYAMIGLKETTTGDTLSDSAQQVVLESMTFPEPVISVAIEPKTKGDQEKLGTAIQRLAEEDPTFQVELDQETGQTIIKGMGELHLDILVDRMKREYKVEANVGKPQVAYRETIRRAVLKEDYVHKKQTGGSGQYAKVQVSIEPLDTADGTFYEFVNAVTGGRVPREYIPSVDNGIQEAMQEGVVAGYPLVGIKASLIDGAAHDVDSSEMAFKIAGKMVLREAVRKAQPVLLEPVMAVEVRTPADYMGDVIGDLNSRRGQIESMEDVSGAKLVKASVPLSEMFGYVGDLRSKTQGRAVYSMQFSNYAEVPRNVADEIVKKVRGE.

The region spanning 10–286 (TKVRNIGIMA…AVIDYLPSPL (277 aa)) is the tr-type G domain. Residues 19-26 (AHIDAGKT), 83-87 (DTPGH), and 137-140 (NKMD) contribute to the GTP site.

The protein belongs to the TRAFAC class translation factor GTPase superfamily. Classic translation factor GTPase family. EF-G/EF-2 subfamily.

Its subcellular location is the cytoplasm. Functionally, catalyzes the GTP-dependent ribosomal translocation step during translation elongation. During this step, the ribosome changes from the pre-translocational (PRE) to the post-translocational (POST) state as the newly formed A-site-bound peptidyl-tRNA and P-site-bound deacylated tRNA move to the P and E sites, respectively. Catalyzes the coordinated movement of the two tRNA molecules, the mRNA and conformational changes in the ribosome. In Kineococcus radiotolerans (strain ATCC BAA-149 / DSM 14245 / SRS30216), this protein is Elongation factor G.